An 813-amino-acid polypeptide reads, in one-letter code: Polycomb group protein FERTILIZATION-INDEPENDENT SEED 2 (813 aa).

The segment at 1–27 (MARKSIRGKEVVMVSDDDDDDDDVDDD) is disordered. The segment covering 15-26 (SDDDDDDDDVDD) has biased composition (acidic residues). The segment at 134–155 (CPFCLIPCGGHEGLQLHLKSSH) adopts a C2H2-type zinc-finger fold. 3 disordered regions span residues 197–216 (SPLT…DDSN), 232–261 (DLPR…SEKI), and 274–648 (ESSE…RKEL). The segment covering 232–246 (DLPRGTENDSTHVND) has biased composition (basic and acidic residues). Residues 243 to 264 (HVNDDNVSSPPRAHSSEKISDI) form an A-1 repeat. Positions 243–542 (HVNDDNVSSP…HSSKKNKSTR (300 aa)) are 12 X approximate repeat A. One copy of the B-1 repeat lies at 265–281 (LTTTQLAIAESSEPKVP). The tract at residues 265-640 (LTTTQLAIAE…KAEPSEPKVT (376 aa)) is 7 X approximate repeat B. An A-2 repeat occupies 282 to 304 (HVNDGNVSSPPRAHSSAEKNEST). Basic and acidic residues-rich tracts occupy residues 296–307 (SSAEKNESTHVN), 319–331 (HSLE…HVNE), and 344–353 (KKNESTHMND). One copy of the A-3 repeat lies at 305 to 327 (HVNDDDDVSSPPRAHSLEKNEST). The stretch at 328 to 349 (HVNEDNISSPPKAHSSKKNEST) is one A-4 repeat. The A-5 repeat unit spans residues 350–371 (HMNDEDVSFPPRTRSSKETSDI). One copy of the B-2 repeat lies at 372 to 388 (LTTTQPAIVEPSEPKVR). Over residues 388-402 (RRGSRRKQLYAKRYK) the composition is skewed to basic residues. The B-3 repeat unit spans residues 403–419 (ARETQPAIAESSEPKVL). 2 stretches are compositionally biased toward basic and acidic residues: residues 414–423 (SEPKVLHVND) and 453–462 (SEPKVPHVND). The stretch at 420-441 (HVNDENVSSPPEAHSLEKASDI) is one A-6 repeat. The B-4 repeat unit spans residues 442–458 (LTTTQPAIAESSEPKVP). The A-7 repeat unit spans residues 459 to 481 (HVNDENVSSTPRAHSSKKNKSTR). Residues 472-481 (HSSKKNKSTR) show a composition bias toward basic residues. Residues 482-502 (KNVDNVPSPPKTRSSKKTSDI) form an A-8 repeat. Residues 501-512 (DILTTTQPTIAE) are compositionally biased toward polar residues. Residues 503–519 (LTTTQPTIAESSEPKVR) form a B-5 repeat. Positions 514 to 523 (SEPKVRHVND) are enriched in basic and acidic residues. An A-9 repeat occupies 520–542 (HVNDDNVSSTPRAHSSKKNKSTR). An A-10 repeat occupies 543–563 (KNDDNIPSPPKTRSSKKTSNI). A B-6 repeat occupies 564–579 (LTRTQPAIAESEPKVP). Residues 574–586 (SEPKVPHVNDDKV) are compositionally biased toward basic and acidic residues. Residues 580–601 (HVNDDKVSSTPRAHSSKKNKST) form an A-11 repeat. Positions 593 to 602 (HSSKKNKSTH) are enriched in basic residues. The stretch at 602 to 623 (HKKDDNASLPPKTRSSKKTSDI) is one A-12 repeat. The stretch at 624–640 (LATTQPAKAEPSEPKVT) is one B-7 repeat. Residues 648–783 (LHAERCEAKR…CAKTFHKCTT (136 aa)) form a VEFS-box region.

Belongs to the VEFS (VRN2-EMF2-FIS2-SU(Z)12) family. Probably indirectly associated with FIE and/or MEA. In plants, PcG complexes are probably composed of a member of the EZ family (CLF or MEA), FIE, and a member of the VEFS family (FIS2, VRN2 or EMF2). In terms of tissue distribution, weakly expressed. Expressed in late siliques.

The protein localises to the nucleus. In terms of biological role, polycomb group (PcG) protein. PcG proteins act by forming multiprotein complexes, which are required to maintain the transcriptionally repressive state of homeotic genes throughout development. PcG proteins are not required to initiate repression, but to maintain it during later stages of development. They probably act via the methylation of histones, rendering chromatin heritably changed in its expressibility. Required to prevent the proliferation of the central cell by repressing unknown target genes before fertilization. Regulates the anteroposterior organization of the endosperm. The sequence is that of Polycomb group protein FERTILIZATION-INDEPENDENT SEED 2 from Arabidopsis thaliana (Mouse-ear cress).